The primary structure comprises 172 residues: Protein nemuri (172 aa).

The first 25 residues, 1-25 (MSAKYTLIFALAALCCLVFSTEAAA), serve as a signal peptide directing secretion. A disordered region spans residues 27–172 (RSRVLSSRRG…KRRSGKGNKA (146 aa)). Composition is skewed to basic and acidic residues over residues 35-50 (RGSE…KEDS), 58-90 (DLER…DKET), and 97-108 (TIVKPNKDDARA). The stretch at 45-74 (DNKEDSELAAQEQDLERQEQEEQNDRLEGR) forms a coiled coil. Residues 109–172 (RRIVRAGRRR…KRRSGKGNKA (64 aa)) show a composition bias toward basic residues.

Detected in the brain where it accumulates in the dorsal fan-shaped body following sleep deprivation (at protein level). Expressed in the adult body.

It is found in the secreted. Its function is as follows. Antimicrobial protein which is essential for the homeostatic regulation of sleep. Promotes sleep following sleep deprivation or bacterial infection and increases survival following bacterial infection. Likely to promote survival to bacterial infection in two ways; by contributing to the innate immune response and by promoting sleep during sickness to aid recovery. The chain is Protein nemuri from Drosophila melanogaster (Fruit fly).